The primary structure comprises 489 residues: Glutamyl-tRNA(Gln) amidotransferase subunit A (489 aa).

Catalysis depends on charge relay system residues lysine 80 and serine 160. Serine 184 (acyl-ester intermediate) is an active-site residue.

It belongs to the amidase family. GatA subfamily. As to quaternary structure, heterotrimer of A, B and C subunits.

The catalysed reaction is L-glutamyl-tRNA(Gln) + L-glutamine + ATP + H2O = L-glutaminyl-tRNA(Gln) + L-glutamate + ADP + phosphate + H(+). Allows the formation of correctly charged Gln-tRNA(Gln) through the transamidation of misacylated Glu-tRNA(Gln) in organisms which lack glutaminyl-tRNA synthetase. The reaction takes place in the presence of glutamine and ATP through an activated gamma-phospho-Glu-tRNA(Gln). In Wolbachia sp. subsp. Drosophila simulans (strain wRi), this protein is Glutamyl-tRNA(Gln) amidotransferase subunit A.